Here is a 200-residue protein sequence, read N- to C-terminus: Lipopolysaccharide core heptose(II)-phosphate phosphatase (200 aa).

The first 25 residues, 1-25 (MLAFCRSSLKSKKYFIILLALAAIA), serve as a signal peptide directing secretion.

Belongs to the phosphoglycerate mutase family. Ais subfamily.

The protein localises to the periplasm. It participates in bacterial outer membrane biogenesis; lipopolysaccharide metabolism. Functionally, catalyzes the dephosphorylation of heptose(II) of the outer membrane lipopolysaccharide core. This Shigella flexneri serotype 5b (strain 8401) protein is Lipopolysaccharide core heptose(II)-phosphate phosphatase.